The chain runs to 169 residues: Procalin (169 aa).

Positions 1-18 are cleaved as a signal peptide; that stretch reads MKTFIVITFIGILSYAYA. 3 disulfides stabilise this stretch: C21–C125, C54–C168, and C83–C97.

The protein belongs to the calycin superfamily. Triabin family. Expressed in salivary glands.

The protein resides in the secreted. In Hospesneotomae protracta (Western bloodsucking conenose), this protein is Procalin.